The following is a 242-amino-acid chain: U1 small nuclear ribonucleoprotein C (242 aa).

Residues 3 to 35 (YLGDYCDVYLTHDSMSVRKAHNSGRNHLRNVVE) form a Matrin-type; degenerate zinc finger. The disordered stretch occupies residues 60–242 (GQASSNPMLQ…SSPGPSQEGK (183 aa)). Pro residues-rich tracts occupy residues 90 to 107 (MLPP…PGAP), 136 to 149 (PPMP…PLPN), 156 to 183 (PFPP…PPIP), and 201 to 213 (PVPP…PGAP). The span at 231–242 (PASSPGPSQEGK) shows a compositional bias: polar residues.

Belongs to the U1 small nuclear ribonucleoprotein C family. In terms of assembly, U1 snRNP is composed of the 7 core Sm proteins B/B', D1, D2, D3, E, F and G that assemble in a heptameric protein ring on the Sm site of the small nuclear RNA to form the core snRNP, and at least 3 U1 snRNP-specific proteins U1-70K, U1-A and U1-C. U1-C interacts with U1 snRNA and the 5' splice-site region of the pre-mRNA.

It is found in the nucleus. Its function is as follows. Component of the spliceosomal U1 snRNP, which is essential for recognition of the pre-mRNA 5' splice-site and the subsequent assembly of the spliceosome. U1-C is directly involved in initial 5' splice-site recognition for both constitutive and regulated alternative splicing. The interaction with the 5' splice-site seems to precede base-pairing between the pre-mRNA and the U1 snRNA. Stimulates commitment or early (E) complex formation by stabilizing the base pairing of the 5' end of the U1 snRNA and the 5' splice-site region. In Ajellomyces capsulatus (strain G186AR / H82 / ATCC MYA-2454 / RMSCC 2432) (Darling's disease fungus), this protein is U1 small nuclear ribonucleoprotein C.